We begin with the raw amino-acid sequence, 251 residues long: CDP-diacylglycerol pyrophosphatase (251 aa).

Residues 5–25 (GYFLLAVIVIVAAAGVGYWKF) form a helical membrane-spanning segment.

Belongs to the Cdh family.

The protein resides in the cell inner membrane. The enzyme catalyses a CDP-1,2-diacyl-sn-glycerol + H2O = a 1,2-diacyl-sn-glycero-3-phosphate + CMP + 2 H(+). It functions in the pathway phospholipid metabolism; CDP-diacylglycerol degradation; phosphatidate from CDP-diacylglycerol: step 1/1. The sequence is that of CDP-diacylglycerol pyrophosphatase from Salmonella typhi.